Reading from the N-terminus, the 189-residue chain is Prophage DNA-packing protein NohA (189 aa).

The protein belongs to the terminase small subunit family.

This Escherichia coli (strain K12) protein is Prophage DNA-packing protein NohA (nohA).